The chain runs to 296 residues: Nucleotide-binding protein SPJ_1472 (296 aa).

ATP is bound at residue 13–20 (GMSGAGKT). Residue 63-66 (DMRS) participates in GTP binding.

This sequence belongs to the RapZ-like family.

Functionally, displays ATPase and GTPase activities. The protein is Nucleotide-binding protein SPJ_1472 of Streptococcus pneumoniae (strain JJA).